The following is a 340-amino-acid chain: MADLKAKFLNVYSVLKSELLQDPAFEFTDISRQWVERMTDYNVPGGKLNRGLSVIDSYKLLKGEELTEEEIFLASALGWCIEWLQAYFLVLDDIMDNSHTRRGQPCWYKVPKVGMIAANDGVLLRNHIFRILKNHFKDKPYYVDLLDLFNEVEFQTASGQMLDLISSEGENDLSKFSLSLHRRIVQYKTAYYSFYLSVACALLMSGENLEDHVDVKNILVQMGIYFQVQDDYLDCFVDPKILGKIGTDIEDFKCSWLVVKALELSNEEQKKILNENYGKADPEKVAKVKALYKELDLEGEFADYESKSYEKLITSIESHPSKAVQAVLKSFLGKIYKRQK.

K47, R50, and Q85 together coordinate isopentenyl diphosphate. Mg(2+) is bound by residues D92 and D96. Position 101 (R101) interacts with dimethylallyl diphosphate. R102 serves as a coordination point for isopentenyl diphosphate. Residues K188, T189, Q227, K244, and K253 each contribute to the dimethylallyl diphosphate site.

The protein belongs to the FPP/GGPP synthase family. Mg(2+) serves as cofactor. As to expression, mainly expressed in trichomes and flowers, and, to a lower extent, in leaves, roots and stems.

It localises to the cytoplasm. The protein localises to the nucleus. The catalysed reaction is isopentenyl diphosphate + dimethylallyl diphosphate = (2E)-geranyl diphosphate + diphosphate. It catalyses the reaction isopentenyl diphosphate + (2E)-geranyl diphosphate = (2E,6E)-farnesyl diphosphate + diphosphate. It participates in isoprenoid biosynthesis; farnesyl diphosphate biosynthesis; farnesyl diphosphate from geranyl diphosphate and isopentenyl diphosphate: step 1/1. It functions in the pathway sesquiterpene biosynthesis. The protein operates within isoprenoid biosynthesis; geranyl diphosphate biosynthesis; geranyl diphosphate from dimethylallyl diphosphate and isopentenyl diphosphate: step 1/1. In terms of biological role, catalyzes the sequential condensation of isopentenyl pyrophosphate with the allylic pyrophosphates, dimethylallyl pyrophosphate, and then with the resultant geranylpyrophosphate to the ultimate product farnesyl pyrophosphate. This chain is Farnesyl pyrophosphate synthase 1, found in Cannabis sativa (Hemp).